We begin with the raw amino-acid sequence, 233 residues long: RNA/RNP complex-1-interacting phosphatase homolog (233 aa).

The span at 1-14 (MSNYHHNHNYQHRP) shows a compositional bias: basic residues. The tract at residues 1–21 (MSNYHHNHNYQHRPRGYERLP) is disordered. In terms of domain architecture, Tyrosine-protein phosphatase spans 34–206 (NVGRDIDGTR…LYEAERKKKY (173 aa)). The active-site Phosphocysteine intermediate is Cys-150. Residue 151–156 (THGLNR) participates in substrate binding. Residue Arg-156 is the Proton donor/acceptor of the active site. The tract at residues 204 to 233 (KKYGKSSGKSSGNSADSTISSEQLHRNNSQ) is disordered. A compositionally biased stretch (low complexity) spans 208 to 217 (KSSGKSSGNS). Residues 218 to 233 (ADSTISSEQLHRNNSQ) are compositionally biased toward polar residues.

Belongs to the protein-tyrosine phosphatase family. Non-receptor class dual specificity subfamily. In terms of assembly, interacts with the ERI/DICER complex component dcr-1. Interacts with ERI/DICER complex components rrf-3 and isoform b of eri-1. Interacts with drh-3 and rde-8.

Its subcellular location is the cytoplasm. The protein resides in the nucleus. Functionally, RNA polyphosphatase which has RNA 5'-triphosphatase and diphosphatase activities. Displays poor protein-tyrosine phosphatase activity. Binds to 5'-triphosphorylated RNAs (also called ppp-RNAs). Dephosphorylates ppp-RNAs converting them to 5'-monophosphorylated RNAs (also called p-RNAs). During small-RNA-mediated gene-silencing or RNA interference (RNAi), involved in the dcr-1-mediated processing of an amplified dsRNA intermediate. This is most likely in association with several components of the ERI/DICER complex including dcr-1, eri-1 and rrf-3. Plays a role in the biogenesis of 26G small interfering RNAs (26G-siRNAs), which are a class of 26 nucleotide siRNAs that possess a guanine residue at the 5'-end, by dephosphorylating 5'-triphosphorylated 26G-siRNAs prior to their maturation by the ERI/DICER complex. Plays a role in the biogenesis of csr-1-bound 22G small interfering RNAs (22G-siRNAs), which are a class of 22 nucleotide siRNAs that possess a guanine residue at the 5'-end. Not required for the biogenesis of microRNAs (miRNA) or for the biogenesis of a class of 21 nucleotide PIWI-interacting RNAs (piRNAs) that possess a uracil residue at the 5'-end (also called 21U-RNAs). This chain is RNA/RNP complex-1-interacting phosphatase homolog, found in Caenorhabditis elegans.